The following is a 387-amino-acid chain: Carboxyaminopropylagmatine decarboxylase (387 aa).

Lys-52 bears the N6-(pyridoxal phosphate)lysine mark.

It belongs to the Orn/Lys/Arg decarboxylase class-II family. It depends on pyridoxal 5'-phosphate as a cofactor.

It catalyses the reaction N(1)-[(S)-3-amino-3-carboxypropyl]agmatine + H(+) = N(1)-(3-aminopropyl)agmatine + CO2. The protein operates within amine and polyamine biosynthesis; spermidine biosynthesis. Its function is as follows. Decarboxylase involved in the biosynthesis of spermidine via the carboxyaminopropylagmatine (CAPA) pathway. Catalyzes the decarboxylation of CAPA to form aminopropylagmatine (APA). Can also decarboxylate carboxyspermidine and carboxynorspermidine, but not ornithine, arginine, lysine and meso-diaminopimelate. The sequence is that of Carboxyaminopropylagmatine decarboxylase from Synechocystis sp. (strain ATCC 27184 / PCC 6803 / Kazusa).